Here is a 308-residue protein sequence, read N- to C-terminus: Small ribosomal subunit protein uS2 (308 aa).

An N-acetylserine modification is found at serine 2. Laminin-binding stretches follow at residues 161-180 (IPCN…MLAR) and 205-229 (RDPE…EFQG). [DE]-W-[ST] repeat units lie at residues 230-232 (EWT), 245-247 (DWS), 279-281 (DWS), 288-290 (DWS), and 306-308 (DWS). Residues 242-308 (EVADWSEGVQ…DWGGATADWS (67 aa)) form a laminin-binding region. Residues 262-308 (AGIEAPGKPAPAEVYAEDWSAQPATEDWSAAPTAQAGDWGGATADWS) are disordered.

The protein belongs to the universal ribosomal protein uS2 family. In terms of assembly, monomer (37LRP) and homodimer (67LR). Component of the small ribosomal subunit. Mature ribosomes consist of a small (40S) and a large (60S) subunit. The 40S subunit contains about 33 different proteins and 1 molecule of RNA (18S). The 60S subunit contains about 49 different proteins and 3 molecules of RNA (28S, 5.8S and 5S). Interacts with rps21. Interacts with several laminins including at least lamb1. Interacts with mdk. Acylated. Acylation may be a prerequisite for conversion of the monomeric 37 kDa laminin receptor precursor (37LRP) to the mature dimeric 67 kDa laminin receptor (67LR), and may provide a mechanism for membrane association. Post-translationally, cleaved by stromelysin-3 (ST3) at the cell surface. Cleavage by stromelysin-3 may be a mechanism to alter cell-extracellular matrix interactions.

The protein resides in the cell membrane. It localises to the cytoplasm. The protein localises to the nucleus. Required for the assembly and/or stability of the 40S ribosomal subunit. Required for the processing of the 20S rRNA-precursor to mature 18S rRNA in a late step of the maturation of 40S ribosomal subunits. Also functions as a cell surface receptor for laminin. Plays a role in cell adhesion to the basement membrane and in the consequent activation of signaling transduction pathways. May play a role in cell fate determination and tissue morphogenesis. The sequence is that of Small ribosomal subunit protein uS2 (rpsa) from Danio rerio (Zebrafish).